The chain runs to 123 residues: Protein Wnt-3b (123 aa).

Ser-1 carries the O-palmitoleoyl serine; by PORCN lipid modification. Residues Cys-89 and Cys-104 are joined by a disulfide bond. The N-linked (GlcNAc...) asparagine glycan is linked to Asn-90.

The protein belongs to the Wnt family. In terms of processing, palmitoleoylation is required for efficient binding to frizzled receptors. Depalmitoleoylation leads to Wnt signaling pathway inhibition.

The protein localises to the secreted. It is found in the extracellular space. It localises to the extracellular matrix. Functionally, ligand for members of the frizzled family of seven transmembrane receptors. Probable developmental protein. May be a signaling molecule which affects the development of discrete regions of tissues. Is likely to signal over only few cell diameters. This Meleagris gallopavo (Wild turkey) protein is Protein Wnt-3b (WNT3B).